The sequence spans 681 residues: Minichromosome maintenance domain-containing protein 2 (681 aa).

Position 292 is a phosphoserine (serine 292). The MCM domain occupies 533-621 (RQFTTEDFEK…LIAALLFETS (89 aa)).

Plays an important role in meiotic recombination and associated DNA double-strand break repair. The chain is Minichromosome maintenance domain-containing protein 2 (MCMDC2) from Homo sapiens (Human).